A 200-amino-acid polypeptide reads, in one-letter code: Cuticle protein 21.3 (200 aa).

A run of 10 repeats spans residues 98–101 (AAPA), 104–107 (AAPA), 116–119 (AAPA), 121–124 (AAPA), 133–136 (AAPA), 154–157 (AAPA), 166–169 (AAPA), 178–181 (AAPA), 184–187 (AAPA), and 196–199 (AAPA).

Its function is as follows. Component of the cuticle of migratory locust which contains more than 100 different structural proteins. The chain is Cuticle protein 21.3 from Locusta migratoria (Migratory locust).